The primary structure comprises 265 residues: Oxygen-evolving enhancer protein 2-2, chloroplastic (265 aa).

The transit peptide at 1 to 79 (MASTQCFLHH…VGSKVSPADA (79 aa)) directs the protein to the chloroplast.

It belongs to the PsbP family.

The protein localises to the plastid. It localises to the chloroplast thylakoid membrane. Functionally, may be involved in the regulation of photosystem II. The sequence is that of Oxygen-evolving enhancer protein 2-2, chloroplastic (PSBP2) from Nicotiana tabacum (Common tobacco).